A 153-amino-acid polypeptide reads, in one-letter code: Large ribosomal subunit protein uL15 (153 aa).

Positions Arg-21 to Ser-42 are disordered. Residues Ile-23–Ile-35 are compositionally biased toward gly residues.

Belongs to the universal ribosomal protein uL15 family. Part of the 50S ribosomal subunit.

Functionally, binds to the 23S rRNA. This is Large ribosomal subunit protein uL15 from Rickettsia peacockii (strain Rustic).